Consider the following 469-residue polypeptide: Protein RUFY3 (469 aa).

Phosphothreonine is present on residues Thr5 and Thr12. A phosphoserine mark is found at Tyr27, Ser34, and Ser49. Thr51 carries the post-translational modification Phosphothreonine. A Phosphoserine modification is found at Asp53. Positions 95–227 (DSDYAPLQQF…IDANFCMKGE (133 aa)) constitute an RUN domain. Coiled-coil stretches lie at residues 271–362 (NRHL…VEKE) and 422–463 (KSEL…AANK). Over residues 321-337 (SYLLESNRKGPKQDRTA) the composition is skewed to basic and acidic residues. Residues 321–342 (SYLLESNRKGPKQDRTAEGQAL) are disordered.

As to quaternary structure, interacts with PAK1. Interacts (via C-terminus) with Ras-related Rab-5 proteins. Interacts (via C-terminus) with Ras-related Rap-2 proteins. Interacts with PIK3CA and PIK3R1. Interacts (via N-terminus) with FSCN1; this interaction induces neuron axon development. Interacts with DBN1. Interacts (via the second coiled coil) with GTP-, but not GDP-bound ARL8A and ARL8B. Interacts with dynactin/DCTN1 and the dynein intermediate chain DYNC1I1/2. Directly interacts with DYNC1LI1. In terms of processing, phosphorylated by PAK1. Isoform 1 is partially phosphorylated. As to expression, expressed in brain (at protein level).

Its subcellular location is the cytoplasm. It localises to the endomembrane system. The protein resides in the cell projection. It is found in the invadopodium. The protein localises to the growth cone. Its subcellular location is the perikaryon. It localises to the filopodium. The protein resides in the lamellipodium. It is found in the lysosome. Functionally, ARL8 effector that promotes the coupling of endolysosomes to dynein-dynactin for retrograde transport along microtubules. Acts by binding both GTP-bound ARL8 and dynein-dynactin. In nonneuronal cells, promotes concentration of endolysosomes in the juxtanuclear area. In hippocampal neurons, drives retrograde transport of endolysosomes from the axon to the soma. Plays a role in the generation of neuronal polarity formation and axon growth. Implicated in the formation of a single axon by developing neurons. May inhibit the formation of additional axons by inhibition of PI3K in minor neuronal processes. Plays a role in the formation of F-actin-enriched protrusive structures at the cell periphery. Plays a role in cytoskeletal organization by regulating the subcellular localization of FSCN1 and DBN1 at axonal growth cones. The polypeptide is Protein RUFY3 (Mus musculus (Mouse)).